The chain runs to 268 residues: Lectin ESA-2 (268 aa).

Tandem repeats lie at residues 1-67, 68-135, 136-202, and 203-268. The tract at residues 1–268 is 4 X approximate tandem repeats; sequence GRYTVQNQWG…PIGFKGVATS (268 aa).

As to quaternary structure, monomer.

Lectin specific for high mannose N-glycans, recognizes the branched moiety of these glycans. Does not recognize other types of N-glycans or monosaccharides. Agglutinates trypsin-treated sheep and rabbit erythrocytes and untreated sheep erythrocytes. Has mitogenic activity on mouse lymphocytes. Does not require metal ions for activity. The polypeptide is Lectin ESA-2 (Eucheuma serra (Marine red alga)).